The sequence spans 621 residues: Nitrate reductase [NADH] 1 (621 aa).

The Cytochrome b5 heme-binding domain maps to 249 to 324 (GKEFTMSEVR…LDTYRIGELI (76 aa)). 2 residues coordinate heme: His-284 and His-307. Residues 361 to 473 (REKIHCRLVG…KGPLGHVEYT (113 aa)) enclose the FAD-binding FR-type domain. FAD-binding positions include 413 to 416 (RAYT), 430 to 432 (LVK), Phe-435, 447 to 449 (LMT), Ser-497, and Thr-500.

The protein belongs to the nitrate reductase family. Homodimer. FAD serves as cofactor. Requires heme as cofactor. The cofactor is Mo-molybdopterin.

It carries out the reaction nitrite + NAD(+) + H2O = nitrate + NADH + H(+). In terms of biological role, nitrate reductase is a key enzyme involved in the first step of nitrate assimilation in plants, fungi and bacteria. This Zea mays (Maize) protein is Nitrate reductase [NADH] 1.